Here is a 448-residue protein sequence, read N- to C-terminus: RuvB-like 2 (448 aa).

73 to 80 (GEPGAGKT) serves as a coordination point for ATP.

This sequence belongs to the RuvB family. Forms homohexameric rings. May form a dodecamer with ruvb-1 made of two stacked hexameric rings. As to expression, expressed in gonadal cells.

Its subcellular location is the cytoplasm. The protein localises to the nucleus. It carries out the reaction ATP + H2O = ADP + phosphate + H(+). In terms of biological role, possesses single-stranded DNA-stimulated ATPase and ATP-dependent DNA helicase (5' to 3') activity suggesting a role in nuclear processes such as recombination and transcription. May participate in several chromatin remodeling complexes that mediate the ATP-dependent exchange of histones and remodel chromatin by shifting nucleosomes. Involvement in these complexes is likely required for transcriptional activation of selected genes and DNA repair in response to DNA damage. Has a role in gonadal development. Involved in the endoplasmic reticulum (ER)-associated degradation (ERAD) pathway where it negatively regulates expression of ER stress response genes. Specifically, negatively controls the expression of ER homeostasis regulator ckb-2 in a cdc-48.1/2-dependent manner. The sequence is that of RuvB-like 2 from Caenorhabditis elegans.